A 547-amino-acid polypeptide reads, in one-letter code: Glucose-6-phosphate isomerase 2 (547 aa).

E351 functions as the Proton donor in the catalytic mechanism. Active-site residues include H382 and K508.

Belongs to the GPI family.

The protein resides in the cytoplasm. The catalysed reaction is alpha-D-glucose 6-phosphate = beta-D-fructose 6-phosphate. The protein operates within carbohydrate biosynthesis; gluconeogenesis. Its pathway is carbohydrate degradation; glycolysis; D-glyceraldehyde 3-phosphate and glycerone phosphate from D-glucose: step 2/4. Functionally, catalyzes the reversible isomerization of glucose-6-phosphate to fructose-6-phosphate. This chain is Glucose-6-phosphate isomerase 2, found in Neisseria gonorrhoeae (strain ATCC 700825 / FA 1090).